We begin with the raw amino-acid sequence, 340 residues long: uncharacterized protein (340 aa).

The 250-residue stretch at 58-307 folds into the Radical SAM core domain; that stretch reads AALPFRYTVN…PSYREMLRER (250 aa). Residues cysteine 72, cysteine 76, and cysteine 79 each contribute to the [4Fe-4S] cluster site. A run of 2 helical transmembrane segments spans residues 140-160 and 243-263; these read YALM…LSIL and QLLG…GLHL.

[4Fe-4S] cluster serves as cofactor.

It is found in the cell membrane. This is an uncharacterized protein from Mycobacterium tuberculosis (strain CDC 1551 / Oshkosh).